The chain runs to 441 residues: Putative collagenous domain-containing protein R238 (441 aa).

A Collagen-like domain is found at 164-199; it reads GCKGEKGIKGELGPKGNTGQKGDIGSKGDRGDKGEP. A disordered region spans residues 171–198; it reads IKGELGPKGNTGQKGDIGSKGDRGDKGE. Residues 187-198 show a composition bias toward basic and acidic residues; the sequence is IGSKGDRGDKGE.

This chain is Putative collagenous domain-containing protein R238, found in Acanthamoeba polyphaga (Amoeba).